Consider the following 274-residue polypeptide: Penicillin-insensitive murein endopeptidase (274 aa).

Positions 1–19 (MNKTAIALLALLASSASLA) are cleaved as a signal peptide. Cystine bridges form between cysteine 44–cysteine 265, cysteine 187–cysteine 235, and cysteine 216–cysteine 223. Zn(2+)-binding residues include histidine 110, histidine 113, aspartate 120, aspartate 147, histidine 150, and histidine 211. Positions 227-274 (PLPPPGDGCGAELQSWFEPPKPGTTKPEKKTPPPLPPSCQALLDEHVI) are disordered.

It belongs to the peptidase M74 family. Dimer. The cofactor is Zn(2+).

It is found in the periplasm. Its function is as follows. Murein endopeptidase that cleaves the D-alanyl-meso-2,6-diamino-pimelyl amide bond that connects peptidoglycan strands. Likely plays a role in the removal of murein from the sacculus. This Escherichia coli O1:K1 / APEC protein is Penicillin-insensitive murein endopeptidase.